The sequence spans 591 residues: Vomeromodulin (591 aa).

An N-terminal signal peptide occupies residues M1–L18. The segment at N151–Q172 is disordered. N-linked (GlcNAc...) asparagine glycans are attached at residues N421 and N516.

N-glycosylated. The N-glycans consist mainly of complex sialylated and fucosylated biantennary structures. Expressed in lung. Not detected in other tissues tested (at protein level).

It is found in the secreted. The chain is Vomeromodulin from Mus musculus (Mouse).